The chain runs to 963 residues: Adhesion G protein-coupled receptor D2 (963 aa).

Over 1-662 (MDAPWGAGER…EEESLLRTLS (662 aa)) the chain is Extracellular. Residues 18–38 (DRSGVSLGPPPTPQVNQGTLG) are disordered. One can recognise a Pentraxin (PTX) domain in the interval 116-325 (TTAVLVFDER…LPTVWVRLLC (210 aa)). Residues Cys-146 and Cys-212 are joined by a disulfide bond. A glycan (N-linked (GlcNAc...) asparagine) is linked at Asn-271. In terms of domain architecture, GAIN-B spans 489 to 649 (MALVASVQRL…AILLQIYEVQ (161 aa)). The GPS stretch occupies residues 599-649 (PLFPPHPPSPYTGGAWATTGCSVAALYLDSTACFCNHSTSFAILLQIYEVQ). Cysteines 619 and 633 form a disulfide. Asn-634 carries N-linked (GlcNAc...) asparagine glycosylation. Residues 663-683 (FVGCGVSFCALTTTFLLFLVA) form a helical membrane-spanning segment. Over 684 to 691 (GVPKSERT) the chain is Cytoplasmic. A helical transmembrane segment spans residues 692 to 712 (TVHKNLTFSLASAEGFLMTSE). Over 713–720 (WAKANEVA) the chain is Extracellular. A helical membrane pass occupies residues 721 to 741 (CVAVTVAMHFLFLVAFSWMLV). Topologically, residues 742-762 (EGLLLWRKVVAVSMHPGPGMR) are cytoplasmic. A helical membrane pass occupies residues 763 to 783 (LYHATGWGVPVGIVAVTLAML). The Extracellular segment spans residues 784-800 (PHDYVAPGHCWLNVHTN). A helical membrane pass occupies residues 801 to 821 (AIWAFVGPVLFVLTANTCILA). The Cytoplasmic segment spans residues 822–857 (RVVMITVSSARRRARMLSPQPCLQQQIWTQIWATVK). The chain crosses the membrane as a helical span at residues 858–878 (PVLVLLPVLGLTWLAGILVHL). The Extracellular segment spans residues 879-880 (SP). Residues 881 to 901 (AWAYAAVGLNSIQGLYIFLVY) traverse the membrane as a helical segment. The Cytoplasmic portion of the chain corresponds to 902–963 (AACNEEVRSA…TPRHPLKAPA (62 aa)).

The protein belongs to the G-protein coupled receptor 2 family. Adhesion G-protein coupled receptor (ADGR) subfamily.

It localises to the membrane. Orphan receptor. The polypeptide is Adhesion G protein-coupled receptor D2 (ADGRD2) (Homo sapiens (Human)).